A 306-amino-acid polypeptide reads, in one-letter code: Cilia- and flagella-associated protein 73 (306 aa).

Coiled-coil stretches lie at residues 49–139 (LQAQ…QRLE) and 197–231 (QSEK…WESK).

It belongs to the CFAP73 family.

The protein localises to the cytoplasm. It localises to the cytoskeleton. Its subcellular location is the cilium axoneme. In terms of biological role, may play a role in ciliary/flagellar motility by regulating the assembly and the activity of axonemal inner dynein arm. The protein is Cilia- and flagella-associated protein 73 of Mus musculus (Mouse).